A 223-amino-acid polypeptide reads, in one-letter code: MOB-like protein phocein (223 aa).

Residues M1–N23 form a disordered region. Residues C92, C97, H169, and H174 each coordinate Zn(2+).

The protein belongs to the MOB1/phocein family.

Its subcellular location is the cytoplasm. The protein localises to the perinuclear region. It is found in the membrane. The protein resides in the golgi apparatus. It localises to the golgi stack membrane. May play a role in membrane trafficking, specifically in membrane budding reactions. This Caenorhabditis elegans protein is MOB-like protein phocein.